The primary structure comprises 92 residues: MAKPDIHPTWYPDAKVICNGEVVMTTGSTTPELHVDVWSGNHPFFTGTQKILDTEGRVDRFMRKYGMGSANPDVDAPAPKKAAKKSDAESDS.

The tract at residues 66–92 is disordered; it reads GMGSANPDVDAPAPKKAAKKSDAESDS. Low complexity predominate over residues 70-80; sequence ANPDVDAPAPK.

It belongs to the bacterial ribosomal protein bL31 family. Type A subfamily. As to quaternary structure, part of the 50S ribosomal subunit.

In terms of biological role, binds the 23S rRNA. In Synechococcus sp. (strain RCC307), this protein is Large ribosomal subunit protein bL31.